A 729-amino-acid chain; its full sequence is Fibroblast growth factor receptor 2 (729 aa).

The N-terminal stretch at 1-21 (MFSWSYLMGLVMVATATLSLA) is a signal peptide. At 22-285 (RPSYNIAEDT…ELDSSSEYTE (264 aa)) the chain is on the extracellular side. Positions 29–62 (EDTTLEPEDANSSGDDEDDNDGSEDFTNDNNHMR) are disordered. Residues 31-55 (TTLEPEDANSSGDDEDDNDGSEDFT) show a composition bias toward acidic residues. Asn-39 carries an N-linked (GlcNAc...) asparagine glycan. 2 Ig-like C2-type domains span residues 64-157 (PYWT…YHLD) and 166-268 (PILQ…AWLT). The segment at 71 to 88 (KLEKKLHAVPAANTVKFR) is heparin-binding. Cysteines 89 and 141 form a disulfide. 7 N-linked (GlcNAc...) asparagine glycosylation sites follow: Asn-138, Asn-151, Asn-175, Asn-207, Asn-228, Asn-241, and Asn-256. Cys-188 and Cys-252 are joined by a disulfide. The helical transmembrane segment at 286–306 (IAIYCVGGFLITCMIGTIMVC) threads the bilayer. At 307–729 (HMKGRGKKSD…SQHTNGTIKT (423 aa)) the chain is on the cytoplasmic side. The residue at position 374 (Tyr-374) is a Phosphotyrosine; by autocatalysis. In terms of domain architecture, Protein kinase spans 389–678 (LTLGKPLGEG…LTQTTNEEYL (290 aa)). ATP-binding positions include 395 to 403 (LGEGCFGQV), Lys-425, 473 to 475 (EYA), and Asn-479. Tyr-494 bears the Phosphotyrosine; by autocatalysis mark. The active-site Proton acceptor is Asp-534. Tyr-564, Tyr-565, and Tyr-677 each carry phosphotyrosine; by autocatalysis. The segment at 683-729 (PLEQYSPSYPDTRSSCSSGDDSVFSPDAMPYDPCLPKSQHTNGTIKT) is disordered. Residues 693 to 707 (DTRSSCSSGDDSVFS) are compositionally biased toward low complexity. The segment covering 720-729 (SQHTNGTIKT) has biased composition (polar residues).

It belongs to the protein kinase superfamily. Tyr protein kinase family. Fibroblast growth factor receptor subfamily. Monomer. Homodimer after ligand binding. In terms of processing, autophosphorylated. Binding of FGF family members together with heparan sulfate proteoglycan or heparin promotes receptor dimerization and autophosphorylation on tyrosine residues. Autophosphorylation occurs in trans between the two FGFR molecules present in the dimer. Post-translationally, N-glycosylated in the endoplasmic reticulum. The N-glycan chains undergo further maturation to an Endo H-resistant form in the Golgi apparatus. Ubiquitinated. FGFR2 is rapidly ubiquitinated after autophosphorylation, leading to internalization and degradation. Subject to degradation both in lysosomes and by the proteasome.

The protein resides in the cell membrane. Its subcellular location is the golgi apparatus. It localises to the cytoplasmic vesicle. The enzyme catalyses L-tyrosyl-[protein] + ATP = O-phospho-L-tyrosyl-[protein] + ADP + H(+). With respect to regulation, present in an inactive conformation in the absence of bound ligand. Ligand binding leads to dimerization and activation by autophosphorylation on tyrosine residues. Tyrosine-protein kinase that acts as a cell-surface receptor for fibroblast growth factors and plays an essential role in the regulation of cell proliferation, differentiation, migration and apoptosis, and in the regulation of embryonic development. Required for normal embryonic patterning, limb bud development, lung morphogenesis, osteogenesis and skin development. Plays an essential role in the regulation of osteoblast differentiation, proliferation and apoptosis, and is required for normal skeleton development. Promotes cell proliferation in keratinocytes and immature osteoblasts, but promotes apoptosis in differentiated osteoblasts. Phosphorylates PLCG1, FRS2 and PAK4. Ligand binding leads to the activation of several signaling cascades. Activation of PLCG1 leads to the production of the cellular signaling molecules diacylglycerol and inositol 1,4,5-trisphosphate. Phosphorylation of FRS2 triggers recruitment of GRB2, GAB1, PIK3R1 and SOS1, and mediates activation of RAS, MAPK1/ERK2, MAPK3/ERK1 and the MAP kinase signaling pathway, as well as of the AKT1 signaling pathway. FGFR2 signaling is down-regulated by ubiquitination, internalization and degradation. Mutations that lead to constitutive kinase activation or impair normal FGFR2 maturation, internalization and degradation lead to aberrant signaling. Over-expressed FGFR2 promotes activation of STAT1. The polypeptide is Fibroblast growth factor receptor 2 (FGFR2) (Notophthalmus viridescens (Eastern newt)).